Here is a 404-residue protein sequence, read N- to C-terminus: MKRTVIMMLDSFGVGAAGDAAKFGDLGSDTFGHIAKACAEGKADIGREGPLTLPNLARLGLAHAAMESTGAFAPGFADDVELIGAYGHAQELSSGKDTPSGHWEMAGVPVLFDWGYFSEHQNSFPKELTDKILARAGLDGFLGNCHASGTTILEELGEEHMRSGKPIFYTSADSVFQIACHEGTFGLENLYRLCEIAREELEPYNIGRVIARPFDGTGPNDFARTGNRKDYSLEPPAKTVLDKLKAAGGEVVSVGKIADIYAYCGITKKVKANGLEALFDATLAEVKSAGENTIVFTNFVDFDSHYGHRRDVAGYAKGLEYFDSRLPEMLSLLDEDDLLILTADHGCDPTWQGTDHTREYVPVLAYGAGLKAGSLGRRNSFADIGQSIASYFKLEPMEYGESFI.

Residues aspartate 10, aspartate 303, histidine 308, aspartate 344, histidine 345, and histidine 356 each contribute to the Mn(2+) site.

This sequence belongs to the phosphopentomutase family. Mn(2+) is required as a cofactor.

It localises to the cytoplasm. The enzyme catalyses 2-deoxy-alpha-D-ribose 1-phosphate = 2-deoxy-D-ribose 5-phosphate. It catalyses the reaction alpha-D-ribose 1-phosphate = D-ribose 5-phosphate. It participates in carbohydrate degradation; 2-deoxy-D-ribose 1-phosphate degradation; D-glyceraldehyde 3-phosphate and acetaldehyde from 2-deoxy-alpha-D-ribose 1-phosphate: step 1/2. In terms of biological role, isomerase that catalyzes the conversion of deoxy-ribose 1-phosphate (dRib-1-P) and ribose 1-phosphate (Rib-1-P) to deoxy-ribose 5-phosphate (dRib-5-P) and ribose 5-phosphate (Rib-5-P), respectively. The protein is Phosphopentomutase of Shewanella sp. (strain MR-7).